The sequence spans 428 residues: Elongation factor 1-alpha (428 aa).

One can recognise a tr-type G domain in the interval 5-217; that stretch reads KPHVNIVFIG…DQIPEPEKPT (213 aa). The segment at 14-21 is G1; it reads GHVDHGKS. 14 to 21 provides a ligand contact to GTP; it reads GHVDHGKS. A Mg(2+)-binding site is contributed by Ser-21. The interval 68–72 is G2; that stretch reads GITID. The tract at residues 89–92 is G3; that stretch reads DAPG. Residues 89–93 and 144–147 each bind GTP; these read DAPGH and NKMD. A G4 region spans residues 144-147; sequence NKMD. The tract at residues 181-183 is G5; that stretch reads SAW.

The protein belongs to the TRAFAC class translation factor GTPase superfamily. Classic translation factor GTPase family. EF-Tu/EF-1A subfamily.

The protein localises to the cytoplasm. The enzyme catalyses GTP + H2O = GDP + phosphate + H(+). Functionally, GTP hydrolase that promotes the GTP-dependent binding of aminoacyl-tRNA to the A-site of ribosomes during protein biosynthesis. The sequence is that of Elongation factor 1-alpha from Thermococcus sibiricus (strain DSM 12597 / MM 739).